Here is a 321-residue protein sequence, read N- to C-terminus: Citrate synthase (321 aa).

Residues histidine 248 and aspartate 306 contribute to the active site.

This sequence belongs to the citrate synthase family.

The catalysed reaction is oxaloacetate + acetyl-CoA + H2O = citrate + CoA + H(+). It functions in the pathway carbohydrate metabolism; tricarboxylic acid cycle; isocitrate from oxaloacetate: step 1/2. The protein is Citrate synthase (gltA) of Bartonella elizabethae (Rochalimaea elizabethae).